The chain runs to 602 residues: Elongation factor 4 (602 aa).

The 183-residue stretch at 8 to 190 (DLIRNFSIVA…AIVHRLPPPK (183 aa)) folds into the tr-type G domain. GTP is bound by residues 20 to 25 (DHGKST) and 137 to 140 (NKID).

Belongs to the TRAFAC class translation factor GTPase superfamily. Classic translation factor GTPase family. LepA subfamily.

It is found in the cell inner membrane. The catalysed reaction is GTP + H2O = GDP + phosphate + H(+). Required for accurate and efficient protein synthesis under certain stress conditions. May act as a fidelity factor of the translation reaction, by catalyzing a one-codon backward translocation of tRNAs on improperly translocated ribosomes. Back-translocation proceeds from a post-translocation (POST) complex to a pre-translocation (PRE) complex, thus giving elongation factor G a second chance to translocate the tRNAs correctly. Binds to ribosomes in a GTP-dependent manner. The protein is Elongation factor 4 of Cereibacter sphaeroides (strain KD131 / KCTC 12085) (Rhodobacter sphaeroides).